The following is a 139-amino-acid chain: Acyl carrier protein 5, chloroplastic (139 aa).

A chloroplast-targeting transit peptide spans 1 to 54 (MATSFCSSISMQAPFSATTTRFCLNKQATIFNNEKTNNLSFSLRRLMPARLAVS). Residues 59 to 134 (QETVEKVSEI…QAAELIEELV (76 aa)) form the Carrier domain. Position 94 is an O-(pantetheine 4'-phosphoryl)serine (Ser94).

This sequence belongs to the acyl carrier protein (ACP) family. 4'-phosphopantetheine is transferred from CoA to a specific serine of apo-ACP by acpS. This modification is essential for activity because fatty acids are bound in thioester linkage to the sulfhydryl of the prosthetic group.

The protein localises to the plastid. It localises to the chloroplast. Its function is as follows. Carrier of the growing fatty acid chain in fatty acid biosynthesis. This Arabidopsis thaliana (Mouse-ear cress) protein is Acyl carrier protein 5, chloroplastic (ACP5).